Consider the following 306-residue polypeptide: MANPLYHKHIISINDLSRDDLELVLATAAGLKANPQPELLKHKVIASCFFEASTRTRLSFETSMHRLGASVVGFADGSNTSLGKKGETLADTISVISTYVDAIVMRHPQEGARMASEFSGNVPVLNAGDGNQHPTQTLLDLFTIQETQGRLSNLSIAMVGDLKYGRTVHSLTQALAKFEGNRFYFIAPDALAMPAYILKMLEEKGIEYSSHGSIEEVVPELDILYMTRVQKERLDPSEYANVKAQFVLAADLAGAANLKVLHPLPRIDEIATDVDKTPHAYYFQQAGNGIFARSALALVVNADLAL.

Carbamoyl phosphate-binding residues include arginine 55 and threonine 56. Position 85 (lysine 85) interacts with L-aspartate. Arginine 106, histidine 133, and glutamine 136 together coordinate carbamoyl phosphate. 2 residues coordinate L-aspartate: arginine 166 and arginine 228. The carbamoyl phosphate site is built by leucine 264 and proline 265.

Belongs to the aspartate/ornithine carbamoyltransferase superfamily. ATCase family. Heterododecamer (2C3:3R2) of six catalytic PyrB chains organized as two trimers (C3), and six regulatory PyrI chains organized as three dimers (R2).

The catalysed reaction is carbamoyl phosphate + L-aspartate = N-carbamoyl-L-aspartate + phosphate + H(+). It functions in the pathway pyrimidine metabolism; UMP biosynthesis via de novo pathway; (S)-dihydroorotate from bicarbonate: step 2/3. In terms of biological role, catalyzes the condensation of carbamoyl phosphate and aspartate to form carbamoyl aspartate and inorganic phosphate, the committed step in the de novo pyrimidine nucleotide biosynthesis pathway. The chain is Aspartate carbamoyltransferase catalytic subunit from Serratia marcescens.